A 404-amino-acid polypeptide reads, in one-letter code: MQIGQRLGTPLSPSATRVMLLGAGELGKEVIIALQRLGVEVVAVDRYPDAPGHQVAHRAHVIDMTDAAALRAIVEAERPHLIVPEIEAIATDALAAIEAAGLAEVIPTARATQLTMNREGIRRLAAEELGLPTSPYAFADSFEAFSAAIAKIGMPCVVKPVMSSSGKGQSVVKTEADVKPAWDYAMAGGRVNHGRVIVEGFIDFDYEITQLTVRAIDPATDATRTYFCEPVGHVQVAGDYVESWQPQPMSAVALEKSREIAHKVTEALGGRGMFGVELFVNGDDVWFSEVSPRPHDTGLVTLASQRQSEFELHARAILGLPVDPALGTPAASAVIYGGLDERGIAFEGVREALAVPGADLRLFGKPESFAKRRMGVALATGATVDEARERAKRAAAAVRPVSAR.

Residues 25–26 and Glu85 contribute to the N(1)-(5-phospho-beta-D-ribosyl)glycinamide site; that span reads EL. ATP-binding positions include Arg118, Lys159, 164 to 169, 199 to 202, and Glu207; these read SSGKGQ and EGFI. One can recognise an ATP-grasp domain in the interval 123–318; sequence RLAAEELGLP…EFELHARAIL (196 aa). Glu277 and Glu289 together coordinate Mg(2+). Residues Asp296, Lys365, and 372 to 373 each bind N(1)-(5-phospho-beta-D-ribosyl)glycinamide; that span reads RR.

Belongs to the PurK/PurT family. As to quaternary structure, homodimer.

The enzyme catalyses N(1)-(5-phospho-beta-D-ribosyl)glycinamide + formate + ATP = N(2)-formyl-N(1)-(5-phospho-beta-D-ribosyl)glycinamide + ADP + phosphate + H(+). It participates in purine metabolism; IMP biosynthesis via de novo pathway; N(2)-formyl-N(1)-(5-phospho-D-ribosyl)glycinamide from N(1)-(5-phospho-D-ribosyl)glycinamide (formate route): step 1/1. Functionally, involved in the de novo purine biosynthesis. Catalyzes the transfer of formate to 5-phospho-ribosyl-glycinamide (GAR), producing 5-phospho-ribosyl-N-formylglycinamide (FGAR). Formate is provided by PurU via hydrolysis of 10-formyl-tetrahydrofolate. The polypeptide is Formate-dependent phosphoribosylglycinamide formyltransferase (Burkholderia lata (strain ATCC 17760 / DSM 23089 / LMG 22485 / NCIMB 9086 / R18194 / 383)).